We begin with the raw amino-acid sequence, 767 residues long: Polyketide biosynthesis protein PksE (767 aa).

Residues 1–312 are acyl transferase; that stretch reads MITYVFPGQG…QRNVQAGITA (312 aa). Residues S87 and H193 contribute to the active site.

The protein in the N-terminal section; belongs to the FabD family.

The protein resides in the cytoplasm. It catalyses the reaction holo-[ACP] + malonyl-CoA = malonyl-[ACP] + CoA. It functions in the pathway antibiotic biosynthesis; bacillaene biosynthesis. Its function is as follows. Probably involved in some intermediate steps for the synthesis of the antibiotic polyketide bacillaene which is involved in secondary metabolism. Probably has an acyl transferase activity and could also have a flavin mononucleotide-dependent oxidoreductase activity. The chain is Polyketide biosynthesis protein PksE (pksE) from Bacillus subtilis (strain 168).